We begin with the raw amino-acid sequence, 94 residues long: Co-chaperonin GroES (94 aa).

It belongs to the GroES chaperonin family. In terms of assembly, heptamer of 7 subunits arranged in a ring. Interacts with the chaperonin GroEL.

The protein localises to the cytoplasm. Its function is as follows. Together with the chaperonin GroEL, plays an essential role in assisting protein folding. The GroEL-GroES system forms a nano-cage that allows encapsulation of the non-native substrate proteins and provides a physical environment optimized to promote and accelerate protein folding. GroES binds to the apical surface of the GroEL ring, thereby capping the opening of the GroEL channel. The chain is Co-chaperonin GroES from Geobacillus thermodenitrificans (strain NG80-2).